The following is a 992-amino-acid chain: ATP-dependent 6-phosphofructokinase subunit alpha (992 aa).

Residues 1–558 (MNNSVYGVAF…LYSNFMSTTV (558 aa)) are N-terminal catalytic PFK domain 1. ATP is bound by residues Gly193, 256-257 (RS), and 286-289 (GDGS). Position 287 (Asp287) interacts with Mg(2+). Beta-D-fructose 6-phosphate is bound by residues 332–334 (SID), Arg369, 376–378 (MGR), Glu433, Lys460, and 466–469 (HVQR). The active-site Proton acceptor is the Asp334. Positions 559 to 572 (NDDGSQLLPEADRL) are interdomain linker. Residues 573–992 (NIAIVHVGAP…AAKEDSALYV (420 aa)) are C-terminal regulatory PFK domain 2. Beta-D-fructose 2,6-bisphosphate-binding positions include Arg643, 700–704 (TVSNN), Arg738, 745–747 (QGG), Glu805, Arg831, 837–840 (HVQQ), and Arg929.

Belongs to the phosphofructokinase type A (PFKA) family. ATP-dependent PFK group I subfamily. Eukaryotic two domain clade 'E' sub-subfamily. In terms of assembly, heterooctamer of 4 alpha and 4 beta chains. Mg(2+) is required as a cofactor.

The protein resides in the cytoplasm. The enzyme catalyses beta-D-fructose 6-phosphate + ATP = beta-D-fructose 1,6-bisphosphate + ADP + H(+). The protein operates within carbohydrate degradation; glycolysis; D-glyceraldehyde 3-phosphate and glycerone phosphate from D-glucose: step 3/4. Allosterically activated by ADP, AMP, or fructose 2,6-bisphosphate, and allosterically inhibited by ATP or citrate. Functionally, catalyzes the phosphorylation of D-fructose 6-phosphate to fructose 1,6-bisphosphate by ATP, the first committing step of glycolysis. This Kluyveromyces lactis (strain ATCC 8585 / CBS 2359 / DSM 70799 / NBRC 1267 / NRRL Y-1140 / WM37) (Yeast) protein is ATP-dependent 6-phosphofructokinase subunit alpha (PFK1).